The sequence spans 350 residues: Phosphotriesterase-related protein (350 aa).

Positions 24, 26, 170, 202, 231, and 299 each coordinate a divalent metal cation.

Belongs to the metallo-dependent hydrolases superfamily. Phosphotriesterase family. The cofactor is a divalent metal cation.

In Nematostella vectensis (Starlet sea anemone), this protein is Phosphotriesterase-related protein.